A 327-amino-acid polypeptide reads, in one-letter code: BarH-like 1 homeobox protein (327 aa).

Disordered regions lie at residues 1–90 (MEGS…AQSR), 112–184 (APYS…ARTA), and 305–327 (GASEPPPPLPPLAGVLPRAAQPR). The span at 33 to 54 (RSPLELSPRSESSSDCSSPASP) shows a compositional bias: low complexity. The span at 79–90 (QPGQLSAPAQSR) shows a compositional bias: polar residues. 2 stretches are compositionally biased toward basic and acidic residues: residues 133 to 143 (AAEDFRDKLDK) and 152 to 166 (SEYKVKEEGDREISS). The segment at residues 178–237 (PRKARTAFTDHQLAQLERSFERQKYLSVQDRMELAASLNLTDTQVKTWYQNRRTKWKRQT) is a DNA-binding region (homeobox). Positions 316–327 (LAGVLPRAAQPR) are enriched in low complexity.

Belongs to the BAR homeobox family.

It localises to the nucleus. The chain is BarH-like 1 homeobox protein (BARHL1) from Homo sapiens (Human).